Here is a 314-residue protein sequence, read N- to C-terminus: Taste receptor type 2 member 42 (314 aa).

The Extracellular portion of the chain corresponds to 1–7 (MATELDK). Residues 8-28 (IFLILEIAEFIIGMLGNVFIG) form a helical membrane-spanning segment. At 29–50 (LVNCSEGIKNQKVFSADFILTC) the chain is on the cytoplasmic side. Residues 51 to 71 (LAISTIGQLFVILFDSFLVGL) traverse the membrane as a helical segment. Residues 72–101 (ASHLYTTYRLGKPVIMLWHMTNHLTTWLAT) are Extracellular-facing. A helical membrane pass occupies residues 102 to 122 (CLSIFYFFKIAHFPHSLFLWL). The Cytoplasmic portion of the chain corresponds to 123–127 (RWRMN). Residues 128-148 (GMIVMLLILSLFLLIFNSLVL) traverse the membrane as a helical segment. Over 149-187 (EIFIDISLNIIDKSNLTLYLDESKTVYDKLSILKTLLSL) the chain is Extracellular. Residue Asn163 is glycosylated (N-linked (GlcNAc...) asparagine). The chain crosses the membrane as a helical span at residues 188 to 208 (TSFIPFSLSLTSLLFLFLSLV). The Cytoplasmic portion of the chain corresponds to 209 to 238 (RHTRNLKLSSLGSRDSSTEAHRRAMKMVMS). Residues 239–259 (FLFLFIVHFFSLQVANWIFFM) form a helical membrane-spanning segment. Over 260 to 265 (LWNNKY) the chain is Extracellular. The helical transmembrane segment at 266 to 286 (IKFAMLALNAFPSCHSFILIL) threads the bilayer. Over 287–314 (GNSKLRQTAVRLLWHLRNYTKTPNPLPL) the chain is Cytoplasmic.

It belongs to the G-protein coupled receptor T2R family.

It localises to the membrane. Functionally, receptor that may play a role in the perception of bitterness and is gustducin-linked. May play a role in sensing the chemical composition of the gastrointestinal content. The activity of this receptor may stimulate alpha gustducin, mediate PLC-beta-2 activation and lead to the gating of TRPM5. The chain is Taste receptor type 2 member 42 (TAS2R42) from Pan troglodytes (Chimpanzee).